The sequence spans 245 residues: Orotidine 5'-phosphate decarboxylase (245 aa).

Substrate-binding positions include Asp-22, Lys-44, 71–80 (DLKFHDIPNT), Thr-131, Arg-192, Gln-201, Gly-221, and Arg-222. Catalysis depends on Lys-73, which acts as the Proton donor.

This sequence belongs to the OMP decarboxylase family. Type 1 subfamily. Homodimer.

The enzyme catalyses orotidine 5'-phosphate + H(+) = UMP + CO2. The protein operates within pyrimidine metabolism; UMP biosynthesis via de novo pathway; UMP from orotate: step 2/2. Its function is as follows. Catalyzes the decarboxylation of orotidine 5'-monophosphate (OMP) to uridine 5'-monophosphate (UMP). In Salmonella typhimurium (strain LT2 / SGSC1412 / ATCC 700720), this protein is Orotidine 5'-phosphate decarboxylase.